A 352-amino-acid polypeptide reads, in one-letter code: Fatty acid synthase (352 aa).

The region spanning 1-352 (MEDVVIAGIA…KVVLSLEHGL (352 aa)) is the Ketosynthase family 3 (KS3) domain. Catalysis depends on for beta-ketoacyl synthase activity residues cysteine 161, histidine 293, and histidine 331.

As to quaternary structure, homodimer which monomers are arranged in a head to tail fashion.

It carries out the reaction acetyl-CoA + n malonyl-CoA + 2n NADPH + 2n H(+) = a long-chain fatty acid + (n+1) CoA + n CO2 + 2n NADP(+).. In terms of biological role, fatty acid synthetase catalyzes the formation of long-chain fatty acids from acetyl-CoA, malonyl-CoA and NADPH. This multifunctional protein has 7 catalytic activities as an acyl carrier protein. The polypeptide is Fatty acid synthase (FASN) (Anser anser anser (Western greylag goose)).